Here is a 504-residue protein sequence, read N- to C-terminus: Maturase K (504 aa).

Belongs to the intron maturase 2 family. MatK subfamily.

Its subcellular location is the plastid. It localises to the chloroplast. In terms of biological role, usually encoded in the trnK tRNA gene intron. Probably assists in splicing its own and other chloroplast group II introns. The protein is Maturase K of Fagus japonica (Japanese beech).